We begin with the raw amino-acid sequence, 122 residues long: MKLLSGLLLCSLVLGVSGQGWFSFIGEAVRGAGDMWRAYSDMREANYINADKYFHARGNYDAAQRGPGGVWAAKVISDVREDLQRLMGHGAEDSMADQAANEWGRSGKDPNHFRPKGLPDKY.

An N-terminal signal peptide occupies residues 1-18 (MKLLSGLLLCSLVLGVSG). Position 19 is a pyrrolidone carboxylic acid (Gln19). Residues 90-122 (GAEDSMADQAANEWGRSGKDPNHFRPKGLPDKY) are disordered. A compositionally biased stretch (basic and acidic residues) spans 105 to 122 (RSGKDPNHFRPKGLPDKY).

This sequence belongs to the SAA family. In terms of assembly, apolipoprotein of the HDL complex. As to expression, expressed by the liver; secreted in plasma.

It localises to the secreted. Its function is as follows. Major acute phase reactant. This chain is Serum amyloid A-2 protein (SAA2), found in Oryctolagus cuniculus (Rabbit).